Here is a 1106-residue protein sequence, read N- to C-terminus: Inversin (1106 aa).

16 ANK repeats span residues 13 to 42 (SLASEVHAAAVNGDKSTLLKLIAGNSELKD), 47 to 76 (FGRTPLMYCVLADRVDCAEALLKAGADVNR), 80 to 110 (SRRTALHLAAQKGNYRFMKLLLARRGNWMQK), 113 to 144 (EGMTPLHLTTRHKSPKCLALLLKHMAPGEVDT), 148 to 177 (NKQTALHWSAYYNNPEHVKLLIKHDSNIGI), 181 to 213 (EGKIPLHWAANNKDPSAIHTVKCILEAAPTESL), 220 to 250 (EGRTPLHFAVADGNVAVVDVLTSYEGCNVTS), 254 to 285 (LFRTPLHWAALLGHAQIVHLLLERNKFGTIPS), 288 to 317 (QGATPLHYAAQSNFAETVEVFLKHPSVKDD), 321 to 350 (EGRTSFMWAAGKGSDNVIRTMLDLKLDIDI), 356 to 385 (YAGTALHAAALSGHVSTVKLLLERNAQVDA), 389 to 418 (MKHTPLFRACEMGHKEVIQTLIKGGARVDL), 422 to 451 (DGHSPLHWAALGGNADVCQILIENKINPNV), 455 to 484 (AGRTPLQCAAYGGYINCMVVLLENNADPNI), 488 to 517 (EGRTALHWLCNNGYLDAIKLLLGFDAFPNH), and 523 to 553 (ERYTPLDYALLGEHHEVIQFMLEHGALSIAA). A D-box 1 motif is present at residues 490-498 (RTALHWLCN). Residues 555–584 (QDIAAFKIQAVYKGYKVRKAFQERKNLLMK) form the IQ 1 domain. Positions 589 to 607 (RKDAAAKKREEESKRKEAS) are enriched in basic and acidic residues. 4 disordered regions span residues 589–615 (RKDAAAKKREEESKRKEASLQKGMQNM), 636–688 (LQLS…ELQS), 746–782 (ANGTSAHGNRRHASACGTAGAGEKTRDQSLSSSGNRG), and 809–833 (AVPKSKRHQQKSRHKEVNYERCSPA). Polar residues-rich tracts occupy residues 636–645 (LQLSNKQTDL) and 653–666 (VSASQIQLGRNSRG). Residues 812–822 (KSKRHQQKSRH) show a composition bias toward basic residues. The D-box 2 motif lies at 944–952 (RKELFRKKN). One can recognise an IQ 2 domain in the interval 951–980 (KNYAATVIQRTWRSYRLRQELSQLLSAKRQ).

As to quaternary structure, binds calmodulin via its IQ domains. Interacts with APC2.

It localises to the cytoplasm. The protein localises to the cytoskeleton. In terms of biological role, required for normal renal development and establishment of left-right axis. Probably acts as a molecular switch between different Wnt signaling pathways. Inhibits the canonical Wnt pathway by targeting cytoplasmic disheveled for degradation by the ubiquitin-proteasome. This suggests that it is required in renal development to oppose the repression of terminal differentiation of tubular epithelial cells by Wnt signaling. The protein is Inversin (INVS) of Gallus gallus (Chicken).